The primary structure comprises 262 residues: Apolipoprotein A-Ia (262 aa).

Positions 1–18 (MKFVALALTLLLALGSQA) are cleaved as a signal peptide. The tract at residues 32–63 (YKAAALVYLNQVKDQAEKALDNLDGTDYEQYK) is 3 X approximate tandem repeats. 2 tandem repeats follow at residues 64-85 (LQLS…QALT) and 87-107 (YAET…ERVM). Residues 64-262 (LQLSESLTKL…YETIAKAIQA (199 aa)) are 10 X approximate tandem repeats. Residues 108 to 118 (TDVEDLRSKLE) form a 3; half-length repeat. Tandem repeats lie at residues 119–140 (PHRA…EKLE), 141–162 (PVFQ…AKLE), 163–184 (PLMD…SKVV), 185–206 (PMVE…TMAA), and 207–228 (PYAE…EKIA). Residues 229 to 239 (PHTQDLQTRME) form a 9; half-length repeat. Repeat unit 10 spans residues 240–262 (PYMENVRTTFAQMYETIAKAIQA).

It belongs to the apolipoprotein A1/A4/E family. In terms of assembly, homodimer. Interacts with naxe and yjefn3.

Its subcellular location is the secreted. In terms of biological role, participates in the reverse transport of cholesterol from tissues to the liver for excretion by promoting cholesterol efflux from tissues and by acting as a cofactor for the lecithin cholesterol acyltransferase (LCAT). This chain is Apolipoprotein A-Ia, found in Danio rerio (Zebrafish).